The sequence spans 444 residues: uncharacterized protein (444 aa).

Residues 1-11 (MASSAGRDKLR) show a composition bias toward basic and acidic residues. The tract at residues 1–35 (MASSAGRDKLRSRGQRVFAFGSSTPRDLSHMSKVP) is disordered.

This is an uncharacterized protein from Caenorhabditis elegans.